Here is a 187-residue protein sequence, read N- to C-terminus: Decorin-binding protein B (187 aa).

The signal sequence occupies residues 1-20 (MKIGKLNSIVIALFFKLLVA).

The protein belongs to the decorin-binding protein family.

Functionally, binds to decorin which may mediate the adherence of B.burgdorferi to collagen fibers in skin and other tissues. In Borreliella burgdorferi (strain ATCC 35210 / DSM 4680 / CIP 102532 / B31) (Borrelia burgdorferi), this protein is Decorin-binding protein B (dbpB).